Consider the following 299-residue polypeptide: Phosphatidylcholine-sterol acyltransferase (299 aa).

An N-linked (GlcNAc...) asparagine glycan is attached at asparagine 30. Catalysis depends on serine 127, which acts as the Nucleophile. The N-linked (GlcNAc...) asparagine glycan is linked to asparagine 185. Cysteine 226 and cysteine 269 are disulfide-bonded. Catalysis depends on charge relay system residues aspartate 258 and histidine 290.

Belongs to the AB hydrolase superfamily. Lipase family.

It is found in the secreted. The catalysed reaction is a sterol + a 1,2-diacyl-sn-glycero-3-phosphocholine = a sterol ester + a 1-acyl-sn-glycero-3-phosphocholine. With respect to regulation, APOA1 is the most potent activator in plasma. Also activated by APOE, APOC1 and APOA4. Functionally, central enzyme in the extracellular metabolism of plasma lipoproteins. Synthesized mainly in the liver and secreted into plasma where it converts cholesterol and phosphatidylcholines (lecithins) to cholesteryl esters and lysophosphatidylcholines on the surface of high and low density lipoproteins (HDLs and LDLs). The cholesterol ester is then transported back to the liver. Has a preference for plasma 16:0-18:2 or 18:O-18:2 phosphatidylcholines. Also produced in the brain by primary astrocytes, and esterifies free cholesterol on nascent APOE-containing lipoproteins secreted from glia and influences cerebral spinal fluid (CSF) APOE- and APOA1 levels. Together with APOE and the cholesterol transporter ABCA1, plays a key role in the maturation of glial-derived, nascent lipoproteins. Required for remodeling high-density lipoprotein particles into their spherical forms. The polypeptide is Phosphatidylcholine-sterol acyltransferase (LCAT) (Eliomys quercinus (Garden dormouse)).